A 450-amino-acid polypeptide reads, in one-letter code: MEQDKYLTVAAITKYIEKKFEVDPYMKQVFVRGEISNLKQPASGHLYFTVKDEFAMLRSVMFQKAVQKIGFVPEDGMNVLITGRIGVFTKAGRYQFYAEHMEPDGVGALYIQLEQLKSQLEKEGLFAEAHKKVLPSFPSKVAVVTSKTGAAVRDILTTIHRRMPSVEVIVYPTVVQGDKAAQRIVENIGRINQRNDIDVMIIGRGGGSLEELWAFNEEPVVRAVYDSDVPVISAVGHETDFALSDFSADVRAATPTAAAELAVPDYRDLEERLAERKYRLLAVTRQLLERKERALEQLKQHLILNGPKHQLEQQMERTDYFAERLKNAFSKQVLLKQTTFNRLNDRLHYYHPKKEIALQKEQIILRKQALDKAMKQQLKDKQQAFIRQVEALEHLSPLALLKRGFGVTYKAGELVKTVQELEIGDNIQVKMQGGHIDAHITAKEEDTSGN.

The protein belongs to the XseA family. In terms of assembly, heterooligomer composed of large and small subunits.

The protein resides in the cytoplasm. It catalyses the reaction Exonucleolytic cleavage in either 5'- to 3'- or 3'- to 5'-direction to yield nucleoside 5'-phosphates.. Its function is as follows. Bidirectionally degrades single-stranded DNA into large acid-insoluble oligonucleotides, which are then degraded further into small acid-soluble oligonucleotides. The polypeptide is Exodeoxyribonuclease 7 large subunit (Listeria innocua serovar 6a (strain ATCC BAA-680 / CLIP 11262)).